A 316-amino-acid chain; its full sequence is Protoheme IX farnesyltransferase (316 aa).

A run of 9 helical transmembrane segments spans residues 32 to 52, 53 to 73, 93 to 113, 116 to 136, 152 to 172, 180 to 200, 221 to 241, 252 to 271, and 289 to 309; these read VMSLVVFTAFAGLVLAPGHIN, PVLGLIAILCIAVGAGASGAL, IPAGRIAPSEALAFGLVLSGF, VILGLAVNWLSAAILAFTIFF, NIVIGGAAGAFPPMIGWACVT, TVLFLIIFLWTPAHFWALALF, VTKHQIVAYAVLTAICAVLPS, LVAAALGAIFVYCSIAVWRM, and IFYLFAVFSALMIDRLAAILV.

Belongs to the UbiA prenyltransferase family. Protoheme IX farnesyltransferase subfamily.

The protein resides in the cell inner membrane. The enzyme catalyses heme b + (2E,6E)-farnesyl diphosphate + H2O = Fe(II)-heme o + diphosphate. Its pathway is porphyrin-containing compound metabolism; heme O biosynthesis; heme O from protoheme: step 1/1. In terms of biological role, converts heme B (protoheme IX) to heme O by substitution of the vinyl group on carbon 2 of heme B porphyrin ring with a hydroxyethyl farnesyl side group. This Rhizobium etli (strain ATCC 51251 / DSM 11541 / JCM 21823 / NBRC 15573 / CFN 42) protein is Protoheme IX farnesyltransferase.